The primary structure comprises 41 residues: Photosystem II reaction center protein J (41 aa).

A helical membrane pass occupies residues isoleucine 9–phenylalanine 29.

This sequence belongs to the PsbJ family. In terms of assembly, PSII is composed of 1 copy each of membrane proteins PsbA, PsbB, PsbC, PsbD, PsbE, PsbF, PsbH, PsbI, PsbJ, PsbK, PsbL, PsbM, PsbT, PsbX, PsbY, PsbZ, Psb30/Ycf12, at least 3 peripheral proteins of the oxygen-evolving complex and a large number of cofactors. It forms dimeric complexes.

It localises to the plastid. Its subcellular location is the chloroplast thylakoid membrane. In terms of biological role, one of the components of the core complex of photosystem II (PSII). PSII is a light-driven water:plastoquinone oxidoreductase that uses light energy to abstract electrons from H(2)O, generating O(2) and a proton gradient subsequently used for ATP formation. It consists of a core antenna complex that captures photons, and an electron transfer chain that converts photonic excitation into a charge separation. The sequence is that of Photosystem II reaction center protein J from Ostreococcus tauri.